The sequence spans 435 residues: Ribosomal protein uS12 methylthiotransferase RimO (435 aa).

Residues 2-118 (KKFHIVKLGC…IVEKIENGEY (117 aa)) enclose the MTTase N-terminal domain. [4Fe-4S] cluster-binding residues include cysteine 11, cysteine 47, cysteine 81, cysteine 150, cysteine 154, and cysteine 157. A Radical SAM core domain is found at 136–364 (IPDSHYAYVK…MTVQSEISKN (229 aa)). In terms of domain architecture, TRAM spans 367–435 (EKYIGETLEV…EYDLEGEIVE (69 aa)).

This sequence belongs to the methylthiotransferase family. RimO subfamily. [4Fe-4S] cluster is required as a cofactor.

It is found in the cytoplasm. The catalysed reaction is L-aspartate(89)-[ribosomal protein uS12]-hydrogen + (sulfur carrier)-SH + AH2 + 2 S-adenosyl-L-methionine = 3-methylsulfanyl-L-aspartate(89)-[ribosomal protein uS12]-hydrogen + (sulfur carrier)-H + 5'-deoxyadenosine + L-methionine + A + S-adenosyl-L-homocysteine + 2 H(+). Functionally, catalyzes the methylthiolation of an aspartic acid residue of ribosomal protein uS12. The sequence is that of Ribosomal protein uS12 methylthiotransferase RimO from Petrotoga mobilis (strain DSM 10674 / SJ95).